A 361-amino-acid chain; its full sequence is Phospho-N-acetylmuramoyl-pentapeptide-transferase (361 aa).

A run of 10 helical transmembrane segments spans residues leucine 28–leucine 48, threonine 74–leucine 94, isoleucine 99–alanine 119, serine 133–aspartate 153, leucine 168–serine 188, valine 203–isoleucine 223, threonine 236–phenylalanine 256, valine 263–isoleucine 283, isoleucine 288–valine 308, and lysine 338–leucine 358.

Belongs to the glycosyltransferase 4 family. MraY subfamily. It depends on Mg(2+) as a cofactor.

Its subcellular location is the cell membrane. The catalysed reaction is UDP-N-acetyl-alpha-D-muramoyl-L-alanyl-gamma-D-glutamyl-meso-2,6-diaminopimeloyl-D-alanyl-D-alanine + di-trans,octa-cis-undecaprenyl phosphate = di-trans,octa-cis-undecaprenyl diphospho-N-acetyl-alpha-D-muramoyl-L-alanyl-D-glutamyl-meso-2,6-diaminopimeloyl-D-alanyl-D-alanine + UMP. Its pathway is cell wall biogenesis; peptidoglycan biosynthesis. Its function is as follows. Catalyzes the initial step of the lipid cycle reactions in the biosynthesis of the cell wall peptidoglycan: transfers peptidoglycan precursor phospho-MurNAc-pentapeptide from UDP-MurNAc-pentapeptide onto the lipid carrier undecaprenyl phosphate, yielding undecaprenyl-pyrophosphoryl-MurNAc-pentapeptide, known as lipid I. In Rickettsia montanensis, this protein is Phospho-N-acetylmuramoyl-pentapeptide-transferase.